We begin with the raw amino-acid sequence, 444 residues long: Pentatricopeptide repeat-containing protein At4g35850, mitochondrial (444 aa).

Residues 1 to 25 constitute a mitochondrion transit peptide; sequence MKFLMQSISGRNRSLVRALVSRRYF. PPR repeat units follow at residues 40–74, 75–109, 110–144, 145–179, 255–289, and 290–325; these read DLSEYNTAVNSVTAQRRHYLLRDVYDDMKLDGVQP, TADIFHSFVVGTMKGARLSDAFFFREEMKAMGIAP, DVNLYNFLISTCGKCKNGKEAIRVYDEMKRYDVKP, NGQTFVCLLNACAVSGQLDLVYAIVRDMTAAGVGL, NLTVYHVAFSALADLKDVKATEALLEMLKKDGKDT, and DTYCMLQIMRCYLHSQDFENGLKLFQDYMSADKIPA.

Belongs to the PPR family. P subfamily.

It is found in the mitochondrion. This is Pentatricopeptide repeat-containing protein At4g35850, mitochondrial from Arabidopsis thaliana (Mouse-ear cress).